A 112-amino-acid chain; its full sequence is Ribonuclease VapC8 (112 aa).

Residues L10–E109 enclose the PINc domain. Positions 12 and 101 each coordinate Mg(2+).

It belongs to the PINc/VapC protein family. Mg(2+) serves as cofactor.

Functionally, toxic component of a type II toxin-antitoxin (TA) system. An RNase. The cognate antitoxin is VapB8. The sequence is that of Ribonuclease VapC8 (vapC8) from Mycobacterium tuberculosis (strain CDC 1551 / Oshkosh).